Reading from the N-terminus, the 648-residue chain is Nucleoside triphosphatase I (648 aa).

The Helicase ATP-binding domain maps to 48-213 (FIGLKNLNSM…NNLIGLLRPN (166 aa)). Position 61-68 (61-68 (WDTGTGKT)) interacts with ATP. Residues 151–154 (DEVH) carry the DEXH box motif. The 164-residue stretch at 379–542 (YIEACRIILN…KINVVFDLLK (164 aa)) folds into the Helicase C-terminal domain. Positions 468-534 (DIIILDMPWN…DIIKNKQGKI (67 aa)) are binding to the cap-specific mRNA (nucleoside-2'-O-)-methyltransferase.

It belongs to the helicase family. NPH I subfamily. Monomer. Interacts (via C-terminus) with RAP94 (via N-terminus). Interacts with the cap-specific mRNA (nucleoside-2'-O-)-methyltransferase.

It localises to the virion. The enzyme catalyses a ribonucleoside 5'-triphosphate + H2O = a ribonucleoside 5'-diphosphate + phosphate + H(+). Its function is as follows. DNA-dependent ATPase required for providing the needed energy to achieve the termination of early transcripts. Acts in concert with the RAP94 subunit of the virion RNA polymerase and the capping enzyme/VTF to catalyze release of UUUUUNU-containing nascent RNA from the elongation complex. NPH-I must bind ssDNA in order to exhibit ATPase activity. The protein is Nucleoside triphosphatase I (NPH1) of Choristoneura fumiferana (Spruce budworm moth).